Here is a 315-residue protein sequence, read N- to C-terminus: Thymidylate synthase (315 aa).

DUMP-binding positions include arginine 22 and 177-178 (RR). Cysteine 197 acts as the Nucleophile in catalysis. DUMP is bound by residues 217–220 (RSAD), asparagine 228, and 258–260 (HLY). Aspartate 220 serves as a coordination point for (6R)-5,10-methylene-5,6,7,8-tetrahydrofolate. (6R)-5,10-methylene-5,6,7,8-tetrahydrofolate is bound at residue alanine 314.

It belongs to the thymidylate synthase family. Bacterial-type ThyA subfamily. As to quaternary structure, homodimer.

The protein resides in the cytoplasm. It catalyses the reaction dUMP + (6R)-5,10-methylene-5,6,7,8-tetrahydrofolate = 7,8-dihydrofolate + dTMP. It participates in pyrimidine metabolism; dTTP biosynthesis. Its function is as follows. Catalyzes the reductive methylation of 2'-deoxyuridine-5'-monophosphate (dUMP) to 2'-deoxythymidine-5'-monophosphate (dTMP) while utilizing 5,10-methylenetetrahydrofolate (mTHF) as the methyl donor and reductant in the reaction, yielding dihydrofolate (DHF) as a by-product. This enzymatic reaction provides an intracellular de novo source of dTMP, an essential precursor for DNA biosynthesis. This chain is Thymidylate synthase, found in Enterococcus faecalis (strain ATCC 700802 / V583).